The following is a 145-amino-acid chain: Basic phospholipase A2 S6-45 (145 aa).

A signal peptide spans 1-19 (MYPAHLLVLLAVCVSLLGA). A propeptide spanning residues 20-27 (SDIPPQPL) is cleaved from the precursor. 7 disulfides stabilise this stretch: Cys-38/Cys-99, Cys-54/Cys-144, Cys-56/Cys-72, Cys-71/Cys-127, Cys-78/Cys-120, Cys-88/Cys-113, and Cys-106/Cys-118. Tyr-55, Gly-57, and Gly-59 together coordinate Ca(2+). His-75 is an active-site residue. Asp-76 contacts Ca(2+). The active site involves Asp-121.

The protein belongs to the phospholipase A2 family. Group I subfamily. D49 sub-subfamily. It depends on Ca(2+) as a cofactor. Expressed by the venom gland.

It localises to the secreted. It catalyses the reaction a 1,2-diacyl-sn-glycero-3-phosphocholine + H2O = a 1-acyl-sn-glycero-3-phosphocholine + a fatty acid + H(+). Its function is as follows. Snake venom phospholipase A2 (PLA2) that inhibits collagen-induced platelet aggregation. PLA2 catalyzes the calcium-dependent hydrolysis of the 2-acyl groups in 3-sn-phosphoglycerides. The protein is Basic phospholipase A2 S6-45 of Austrelaps superbus (Lowland copperhead snake).